Here is a 393-residue protein sequence, read N- to C-terminus: Sister chromatid cohesion protein DCC1 (393 aa).

The protein belongs to the DCC1 family. In terms of assembly, component of the CTF18-RFC complex which consists of CTF8, CTF18, DSCC1 and the RFC complex. Interacts with CTF8 and CTF18. Interacts with DDX11.

Its subcellular location is the nucleus. Its function is as follows. Loads PCNA onto primed templates regulating velocity, spacing and restart activity of replication forks. May couple DNA replication to sister chromatid cohesion through regulation of the acetylation of the cohesin subunit SMC3. This Homo sapiens (Human) protein is Sister chromatid cohesion protein DCC1 (DSCC1).